The chain runs to 247 residues: MPTTTRSSIPEHVAIIMDGNGRWAKQRGLPRVMGHRRGVEAVRETVRAAGDCGISYLTLFAFSSENWRRPESEVSDLMGLLKAFIRRDLAELHRENVRVRIIGDRQGLKTDIRSLLEEAEQMTAGNTKLTLVIAFNYGSRDEITRATASIARDVAEGRLSADAITPEMISSRLDTSGMPDPDLIIRTSGEERLSNFLLWQAAYSEFLFVPEYWPDFDRQRFFSAIEQYATRDRRFGALAEQVAVAGA.

Aspartate 18 is a catalytic residue. Aspartate 18 is a Mg(2+) binding site. Residues 19 to 22, tryptophan 23, arginine 31, histidine 35, and 63 to 65 each bind substrate; these read GNGR and SSE. The Proton acceptor role is filled by asparagine 66. Substrate-binding positions include tryptophan 67, arginine 69, arginine 186, and 192 to 194; that span reads RLS. A Mg(2+)-binding site is contributed by glutamate 205.

This sequence belongs to the UPP synthase family. Homodimer. Mg(2+) is required as a cofactor.

In terms of biological role, catalyzes the condensation of isopentenyl diphosphate (IPP) with allylic pyrophosphates generating different type of terpenoids. The chain is Isoprenyl transferase from Agrobacterium fabrum (strain C58 / ATCC 33970) (Agrobacterium tumefaciens (strain C58)).